The sequence spans 133 residues: Small ribosomal subunit protein bS6 (133 aa).

It belongs to the bacterial ribosomal protein bS6 family.

Functionally, binds together with bS18 to 16S ribosomal RNA. In Chlorobium phaeovibrioides (strain DSM 265 / 1930) (Prosthecochloris vibrioformis (strain DSM 265)), this protein is Small ribosomal subunit protein bS6.